The sequence spans 92 residues: Signal recognition particle 19 kDa protein (92 aa).

This sequence belongs to the SRP19 family. In terms of assembly, part of the signal recognition particle protein translocation system, which is composed of SRP and FtsY. Archaeal SRP consists of a 7S RNA molecule of 300 nucleotides and two protein subunits: SRP54 and SRP19.

It is found in the cytoplasm. Functionally, involved in targeting and insertion of nascent membrane proteins into the cytoplasmic membrane. Binds directly to 7S RNA and mediates binding of the 54 kDa subunit of the SRP. This is Signal recognition particle 19 kDa protein from Halobacterium salinarum (strain ATCC 29341 / DSM 671 / R1).